Consider the following 441-residue polypeptide: MNKFQLPKTLKSLWHHPHNGELISINGWVRSIRKLKNVCFAMVSDGTCQQALQVVTSPEQSKKLSYGASVNIEGQLAVSKNAKLGLQQYELLAEKIKIYGQINDDNYPIQKKHLTTEMLRQIPHLRLRTAKQGEIFRLRSDSLKALRQFFSSKDFTETNPPIITSSDCEGAGEVFTLTPQETHKNKSFERDDQKHFFDRPAFLTVSTQLHLEALALGLSRVYTISPAFRAEQSHTSRHLAEFWMLEAEVAFMTSLSQLTSLMEDMIKYTLNSLMEQNYHRDHWDQLLKPWKCMTYSEAIEELSAVKKTWKYPPKWGNDLSSEHEKYLCEILHKTPVFVTDYPQKIKPFYMKSSGPDTVAAVDLLVPQVGELAGGSLRKDHLDEYKTYPPELQWYLDLMKYSNAPHGGFGLGIERLIAFLEGENTNVKETIPFPRSVGSIFA.

Belongs to the class-II aminoacyl-tRNA synthetase family.

It localises to the mitochondrion. It catalyses the reaction tRNA(Asn) + L-asparagine + ATP = L-asparaginyl-tRNA(Asn) + AMP + diphosphate + H(+). The sequence is that of Asparagine--tRNA ligase, mitochondrial (slm5) from Schizosaccharomyces pombe (strain 972 / ATCC 24843) (Fission yeast).